The chain runs to 245 residues: 1-(5-phosphoribosyl)-5-[(5-phosphoribosylamino)methylideneamino] imidazole-4-carboxamide isomerase (245 aa).

Asp-7 acts as the Proton acceptor in catalysis. Asp-129 serves as the catalytic Proton donor.

It belongs to the HisA/HisF family.

The protein resides in the cytoplasm. It carries out the reaction 1-(5-phospho-beta-D-ribosyl)-5-[(5-phospho-beta-D-ribosylamino)methylideneamino]imidazole-4-carboxamide = 5-[(5-phospho-1-deoxy-D-ribulos-1-ylimino)methylamino]-1-(5-phospho-beta-D-ribosyl)imidazole-4-carboxamide. It participates in amino-acid biosynthesis; L-histidine biosynthesis; L-histidine from 5-phospho-alpha-D-ribose 1-diphosphate: step 4/9. This chain is 1-(5-phosphoribosyl)-5-[(5-phosphoribosylamino)methylideneamino] imidazole-4-carboxamide isomerase, found in Escherichia coli (strain 55989 / EAEC).